Reading from the N-terminus, the 896-residue chain is Translation initiation factor IF-2 (896 aa).

The tract at residues 46 to 315 is disordered; that stretch reads LAHLNRQHGG…FNKPAQPVER (270 aa). The span at 99 to 247 shows a compositional bias: basic and acidic residues; sequence SASEEQEREE…RKQQEKEDVH (149 aa). A compositionally biased stretch (basic residues) spans 269-278; it reads SRKRGKKRRR. Over residues 279 to 288 the composition is skewed to basic and acidic residues; that stretch reads KDEESDDTPR. In terms of domain architecture, tr-type G spans 396–565; it reads PRAPVVTVMG…LLQSEVLDLR (170 aa). The segment at 405–412 is G1; that stretch reads GHVDHGKT. Residue 405 to 412 coordinates GTP; sequence GHVDHGKT. The segment at 430-434 is G2; that stretch reads GITQH. A G3 region spans residues 451-454; the sequence is DTPG. Residues 451-455 and 505-508 contribute to the GTP site; these read DTPGH and NKMD. The G4 stretch occupies residues 505–508; it reads NKMD. Residues 541 to 543 are G5; the sequence is SAH.

This sequence belongs to the TRAFAC class translation factor GTPase superfamily. Classic translation factor GTPase family. IF-2 subfamily.

It localises to the cytoplasm. Functionally, one of the essential components for the initiation of protein synthesis. Protects formylmethionyl-tRNA from spontaneous hydrolysis and promotes its binding to the 30S ribosomal subunits. Also involved in the hydrolysis of GTP during the formation of the 70S ribosomal complex. This chain is Translation initiation factor IF-2, found in Idiomarina loihiensis (strain ATCC BAA-735 / DSM 15497 / L2-TR).